The following is a 727-amino-acid chain: Engulfment and cell motility protein 1 (727 aa).

A Phosphotyrosine; by HCK modification is found at Tyr18. 2 positions are modified to N6-acetyllysine: Lys100 and Lys105. Tyr216 is subject to Phosphotyrosine; by HCK. In terms of domain architecture, ELMO spans 319 to 492 (AQRDIIFELR…VVKEQVMRAL (174 aa)). Phosphoserine is present on Ser344. A phosphotyrosine; by HCK mark is found at Tyr395 and Tyr511. The PH domain maps to 555–676 (RLVEGTCFRK…DGLNALLGKD (122 aa)). The short motif at 707–714 (PDAPPPIP) is the SH3-binding element. Tyr720 carries the phosphotyrosine; by HCK modification.

In terms of assembly, interacts directly with the SH3-domain of DOCK1 via its SH3-binding site. Probably forms a heterotrimeric complex with DOCK1 and RAC1. Interacts with PLEKHG6. Interacts with HCK (via SH3 domain). Interacts with ADGRB1. Interacts with ADGRB3. Interacts with DOCK5. Post-translationally, phosphorylated by HCK.

Its subcellular location is the cytoplasm. The protein localises to the cell membrane. Its function is as follows. Involved in cytoskeletal rearrangements required for phagocytosis of apoptotic cells and cell motility. Acts in association with DOCK1 and CRK. Was initially proposed to be required in complex with DOCK1 to activate Rac Rho small GTPases. May enhance the guanine nucleotide exchange factor (GEF) activity of DOCK1. The polypeptide is Engulfment and cell motility protein 1 (Elmo1) (Mus musculus (Mouse)).